The chain runs to 420 residues: UPF0229 protein LPC_3097 (420 aa).

A disordered region spans residues 83–107; that stretch reads IAGDRIKRPGGGAGGAGGNASDSGE. The segment covering 91-100 has biased composition (gly residues); sequence PGGGAGGAGG.

Belongs to the UPF0229 family.

This Legionella pneumophila (strain Corby) protein is UPF0229 protein LPC_3097.